A 154-amino-acid chain; its full sequence is uncharacterized protein (154 aa).

This is an uncharacterized protein from Bacillus subtilis (strain 168).